The sequence spans 190 residues: Bifunctional protein PyrR (190 aa).

Positions 107–119 (IILVDDVLYSGRT) match the PRPP-binding motif.

The protein belongs to the purine/pyrimidine phosphoribosyltransferase family. PyrR subfamily.

It carries out the reaction UMP + diphosphate = 5-phospho-alpha-D-ribose 1-diphosphate + uracil. Regulates the transcription of the pyrimidine nucleotide (pyr) operon in response to exogenous pyrimidines. In terms of biological role, also displays a weak uracil phosphoribosyltransferase activity which is not physiologically significant. In Corynebacterium diphtheriae (strain ATCC 700971 / NCTC 13129 / Biotype gravis), this protein is Bifunctional protein PyrR.